The primary structure comprises 32 residues: Secreted proteinase (32 aa).

Residues 1–32 form a disordered region; that stretch reads DTANDPKYGSQYAPQKVNADVDQGVXXXHPEL. Asp-22 functions as the Charge relay system in the catalytic mechanism.

It belongs to the peptidase S8 family.

The protein resides in the secreted. This is Secreted proteinase from Haloferax mediterranei (Halobacterium mediterranei).